The sequence spans 315 residues: Glycine--tRNA ligase alpha subunit (315 aa).

It belongs to the class-II aminoacyl-tRNA synthetase family. As to quaternary structure, tetramer of two alpha and two beta subunits.

Its subcellular location is the cytoplasm. It catalyses the reaction tRNA(Gly) + glycine + ATP = glycyl-tRNA(Gly) + AMP + diphosphate. In Pseudomonas entomophila (strain L48), this protein is Glycine--tRNA ligase alpha subunit.